The sequence spans 416 residues: Adenylosuccinate synthetase (416 aa).

GTP-binding positions include 13–19 and 41–43; these read GDEGKGK and GHT. The Proton acceptor role is filled by aspartate 14. Aspartate 14 and glycine 41 together coordinate Mg(2+). IMP-binding positions include 14–17, 39–42, threonine 126, arginine 140, glutamine 220, threonine 235, and arginine 299; these read DEGK and NAGH. The active-site Proton donor is the histidine 42. 295–301 is a binding site for substrate; the sequence is TTTGRKR. GTP is bound by residues arginine 301, 327–329, and 405–407; these read KLD and STS.

The protein belongs to the adenylosuccinate synthetase family. Homodimer. Mg(2+) is required as a cofactor.

It is found in the cytoplasm. It catalyses the reaction IMP + L-aspartate + GTP = N(6)-(1,2-dicarboxyethyl)-AMP + GDP + phosphate + 2 H(+). Its pathway is purine metabolism; AMP biosynthesis via de novo pathway; AMP from IMP: step 1/2. In terms of biological role, plays an important role in the de novo pathway of purine nucleotide biosynthesis. Catalyzes the first committed step in the biosynthesis of AMP from IMP. The sequence is that of Adenylosuccinate synthetase from Campylobacter fetus subsp. fetus (strain 82-40).